The sequence spans 331 residues: tRNA U34 carboxymethyltransferase (331 aa).

Carboxy-S-adenosyl-L-methionine is bound by residues Lys91, Trp105, Lys110, Gly130, 152 to 154 (DPS), 181 to 182 (IE), Met196, Tyr200, and Arg315.

It belongs to the class I-like SAM-binding methyltransferase superfamily. CmoB family. In terms of assembly, homotetramer.

It carries out the reaction carboxy-S-adenosyl-L-methionine + 5-hydroxyuridine(34) in tRNA = 5-carboxymethoxyuridine(34) in tRNA + S-adenosyl-L-homocysteine + H(+). Catalyzes carboxymethyl transfer from carboxy-S-adenosyl-L-methionine (Cx-SAM) to 5-hydroxyuridine (ho5U) to form 5-carboxymethoxyuridine (cmo5U) at position 34 in tRNAs. This chain is tRNA U34 carboxymethyltransferase, found in Shewanella baltica (strain OS185).